A 245-amino-acid polypeptide reads, in one-letter code: MNVTLLIPARYGSSRFPGKPLAPINGKPMIQHVYERASLAKGLTNIYVATDDERIKSAVEGFGGKVVMTSPDAASGTDRINDAINQLGLKDDDLVINLQGDQPLIDPTSIEQVISLFERHPGEFEMATLGYEIVNKAELDDPMHVKMVFDNDYYALYFSRARIPFGRDTKDYPVYKHLGVYAYTRRFVQAFAALPLGRLEDLEKLEQLRALEHGHKIKVAISAFDSIEVDTPEDIRKCEQRLAVD.

Belongs to the KdsB family.

The protein resides in the cytoplasm. The catalysed reaction is 8-amino-3,8-dideoxy-alpha-D-manno-octulosonate + CTP = CMP-8-amino-3,8-dideoxy-alpha-D-manno-oct-2-ulosonate + diphosphate. The protein operates within bacterial outer membrane biogenesis; lipopolysaccharide biosynthesis. Its function is as follows. Activates KDO8N (a required 8-carbon sugar) for incorporation into bacterial lipopolysaccharide in the Shewanella genus. This Shewanella sp. (strain MR-7) protein is 8-amino-3,8-dideoxy-manno-octulosonate cytidylyltransferase.